A 69-amino-acid polypeptide reads, in one-letter code: DNA gyrase inhibitor YacG (69 aa).

The Zn(2+) site is built by Cys-7, Cys-10, Cys-26, and Cys-30.

The protein belongs to the DNA gyrase inhibitor YacG family. Interacts with GyrB. Zn(2+) is required as a cofactor.

Inhibits all the catalytic activities of DNA gyrase by preventing its interaction with DNA. Acts by binding directly to the C-terminal domain of GyrB, which probably disrupts DNA binding by the gyrase. The chain is DNA gyrase inhibitor YacG from Shewanella putrefaciens (strain CN-32 / ATCC BAA-453).